A 353-amino-acid polypeptide reads, in one-letter code: Chemerin-like receptor 2 (353 aa).

The Extracellular segment spans residues 1-41 (MEVSREMLFEELDNYSYALEYYSQEPDAEENVYPGIVHWIS). Residue N14 is glycosylated (N-linked (GlcNAc...) asparagine). The chain crosses the membrane as a helical span at residues 42-62 (LLLYALAFVLGIPGNAIVIWF). The Cytoplasmic portion of the chain corresponds to 63-73 (MGFKWKKTVTT). A helical transmembrane segment spans residues 74-94 (LWFLNLAIADFVFVLFLPLYI). The Extracellular portion of the chain corresponds to 95–112 (SYVALSFHWPFGRWLCKL). A disulfide bond links C110 and C187. Residues 113-133 (NSFIAQLNMFSSVFFLTVISL) traverse the membrane as a helical segment. The Cytoplasmic portion of the chain corresponds to 134–154 (DRYIHLIHPGLSHPHRTLKNS). A helical transmembrane segment spans residues 155–175 (LLVVLFVWLLASLLGGPTLYF). At 176–210 (RDTVEVNNRIICYNNFQEYELTLMRHHVLTWVKFL) the chain is on the extracellular side. A helical transmembrane segment spans residues 211–231 (FGYLLPLLTMSSCYLCLIFKT). Residues 232–247 (KKQNILISSKHLWMIL) are Cytoplasmic-facing. The helical transmembrane segment at 248-268 (SVVIAFMVCWTPFHLFSIWEL) threads the bilayer. The Extracellular portion of the chain corresponds to 269 to 286 (SIHHNSSFQNVLQGGIPL). A helical transmembrane segment spans residues 287 to 307 (STGLAFLNSCLNPILYVLISK). The Cytoplasmic segment spans residues 308–353 (KFQARFRASVAEVLKRSLWEASCSGTVSEQLRSAETKSLSLLETAQ).

The protein belongs to the chemokine-like receptor (CMKLR) family.

It localises to the cell membrane. Receptor for chemoattractant adipokine chemerin/RARRES2 suggesting a role for this receptor in the regulation of inflammation and energy homesotasis. Signals mainly via beta-arrestin pathway. Binding of RARRES2 activates weakly G proteins, calcium mobilization and MAPK1/MAPK3 (ERK1/2) phosphorylation too. Acts also as a receptor for TAFA1, mediates its effects on neuronal stem-cell proliferation and differentiation via the activation of ROCK/ERK and ROCK/STAT3 signaling pathway. This is Chemerin-like receptor 2 (Cmklr2) from Rattus norvegicus (Rat).